The sequence spans 418 residues: Sterigmatocystin 8-O-methyltransferase (418 aa).

A propeptide spanning residues 1–41 is cleaved from the precursor; that stretch reads MTLPNKAALVGLAHTLSEQVKRYLVTADETKSPEDHKLCIE. Residue 170–176 coordinates substrate; it reads MRSAAYF. The interval 206 to 225 is substrate binding; the sequence is LFDYYSTVDEVRGRRFDLGM. S-adenosyl-L-methionine contacts are provided by residues 254–255, Asp-277, 297–298, and Arg-313; these read GG and DI. His-317 serves as the catalytic Proton acceptor.

The protein belongs to the class I-like SAM-binding methyltransferase superfamily. Cation-independent O-methyltransferase family. COMT subfamily.

It catalyses the reaction sterigmatocystin + S-adenosyl-L-methionine = 8-O-methylsterigmatocystin + S-adenosyl-L-homocysteine + H(+). It carries out the reaction dihydrosterigmatocystin + S-adenosyl-L-methionine = 8-O-methyldihydrosterigmatocystin + S-adenosyl-L-homocysteine + H(+). Its pathway is mycotoxin biosynthesis; aflatoxin biosynthesis. Involved in the conversion of sterigmatocystin to O-methylsterigmatocystin (OMST) and dihydrosterigmatocystin to dihydro-o-methylsterigmatocystin in the aflatoxin biosynthesis pathway. The polypeptide is Sterigmatocystin 8-O-methyltransferase (omtA) (Aspergillus flavus (strain ATCC 200026 / FGSC A1120 / IAM 13836 / NRRL 3357 / JCM 12722 / SRRC 167)).